The chain runs to 149 residues: Glucosamine 6-phosphate N-acetyltransferase (149 aa).

An N-acetyltransferase domain is found at 7–149; it reads YTFRKLKLTD…DGGVEMVCRF (143 aa). Substrate is bound by residues threonine 29, 76–79, and 88–90; these read KLIH and EDI. Acetyl-CoA is bound by residues 90 to 92 and 98 to 103; these read ISV and GKKLGY. Substrate-binding positions include 119–120 and aspartate 124; that span reads YK. 133–135 contributes to the acetyl-CoA binding site; the sequence is YEK. Residue arginine 148 coordinates substrate.

This sequence belongs to the acetyltransferase family. GNA1 subfamily.

The enzyme catalyses D-glucosamine 6-phosphate + acetyl-CoA = N-acetyl-D-glucosamine 6-phosphate + CoA + H(+). It participates in nucleotide-sugar biosynthesis; UDP-N-acetyl-alpha-D-glucosamine biosynthesis; N-acetyl-alpha-D-glucosamine 1-phosphate from alpha-D-glucosamine 6-phosphate (route I): step 1/2. The polypeptide is Glucosamine 6-phosphate N-acetyltransferase (GNA1) (Candida albicans (Yeast)).